A 962-amino-acid polypeptide reads, in one-letter code: Alpha-glucan phosphorylase 1 (962 aa).

A chloroplast-targeting transit peptide spans 1–63; that stretch reads MDTMRISGVS…RSFLSVKSIS (63 aa). Positions 525–552 are disordered; the sequence is AKDAQNGVKTEQEEEKTAGEEEEDEVIP. Lysine 808 is subject to N6-(pyridoxal phosphate)lysine.

Belongs to the glycogen phosphorylase family. The cofactor is pyridoxal 5'-phosphate.

Its subcellular location is the plastid. It is found in the chloroplast stroma. The enzyme catalyses [(1-&gt;4)-alpha-D-glucosyl](n) + phosphate = [(1-&gt;4)-alpha-D-glucosyl](n-1) + alpha-D-glucose 1-phosphate. In terms of biological role, phosphorylase is an important allosteric enzyme in carbohydrate metabolism. Enzymes from different sources differ in their regulatory mechanisms and in their natural substrates. However, all known phosphorylases share catalytic and structural properties. May be not required for the degradation of starch, but the phosphorolysis of starch may play an important role in water stress tolerance. This is Alpha-glucan phosphorylase 1 (PHS1) from Arabidopsis thaliana (Mouse-ear cress).